Consider the following 362-residue polypeptide: Serpentine receptor class epsilon-37 (362 aa).

Transmembrane regions (helical) follow at residues 29–49 (IFYV…YILV), 67–87 (IMMC…IVLI), 127–147 (IYFA…AVLA), 170–190 (IPIL…YQTT), 204–224 (IFIG…NLAW), 260–280 (LVVS…VLLF), and 288–308 (FFVH…SLTL).

This sequence belongs to the nematode receptor-like protein sre family.

The protein localises to the membrane. The chain is Serpentine receptor class epsilon-37 (sre-37) from Caenorhabditis elegans.